Consider the following 443-residue polypeptide: Diels-Alderase poxQ (443 aa).

Positions 1–23 are cleaved as a signal peptide; it reads MARIPLEFLSITLPVLLLAYCLA. Residues N78, N97, and N145 are each glycosylated (N-linked (GlcNAc...) asparagine).

The protein belongs to the Diels-Alderase family.

Its pathway is secondary metabolite biosynthesis. Diels-Alderase; part of the gene cluster that mediates the biosynthesis of oxaleimides, cytotoxic compounds containing an unusual disubstituted succinimide moiety. The first step of the pathway is provided by the HR-PKS poxF that serves in a new mode of collaborative biosynthesis with the PKS-NRPS poxE, by providing the olefin containing amino acid substrate via the synthesis of an ACP-bound dec-4-enoate. The cytochrome P450 monooxygenase poxM-catalyzed oxidation at the alpha-position creates the enzyme-bound 2-hydroxydec-4-enoyl-ACP thioester, which may be prone to spontaneous hydrolysis to yield 2-hydroxydec-4-enoic acid due to increased electrophilicity of the carbonyl. 2-hydroxydec-4-enoic acid can then be further oxidized by poxM to yield the alpha-ketoacid 2-oxodec-4-enoicacid, which is reductively aminated by the aminotransferase poxL to yield (S,E)-2-aminodec-4-enoic acid. The Hybrid PKS-NRPS synthetase poxE then performs condensation between the octaketide product of its PKS modules and the amino group of (S,E)-2-aminodec-4-enoic acid which is activated and incorporated by the adenylation domain. The resulting aminoacyl product can be cyclized by the Diels-Alderase PoxQ and reductively released by the reductive (R) domain of poxE to yield an aldehyde intermediate. The released aldehyde is then substrate for a Knoevenagel condensation by the hydrolyase poxO followed by an oxidation at the 5-position of the pyrrolidone ring. The presence of the olefin from the amino acid building block allows for migration of the substituted allyl group to occur. This allylic transposition reaction takes place in a conjugate addition, semipinacol-like fashion to yield a succinimide intermediate. Iterative two-electron oxidations of the C7 methyl of the succinimide intermediate to the carboxylic acid can be catalyzed by one of two remaining cytochrome P450 monooxygenasess poxC or poxD to yield oxaleimide A. Subsequent oxidation yields the maleimide scaffold oxaleimide I. Both oxaleimide A and oxaleimide I can undergo oxidative modifications in the decalin ring to yield the series of products oxaleimides B to H. In Penicillium oxalicum, this protein is Diels-Alderase poxQ.